Here is a 308-residue protein sequence, read N- to C-terminus: N-acetylmuramic acid 6-phosphate etherase (308 aa).

Positions 62-225 (TAARLRQGGR…STGVMVQLGK (164 aa)) constitute an SIS domain. Glu90 (proton donor) is an active-site residue. Glu121 is an active-site residue.

It belongs to the GCKR-like family. MurNAc-6-P etherase subfamily. Homodimer.

The enzyme catalyses N-acetyl-D-muramate 6-phosphate + H2O = N-acetyl-D-glucosamine 6-phosphate + (R)-lactate. It functions in the pathway amino-sugar metabolism; N-acetylmuramate degradation. Functionally, specifically catalyzes the cleavage of the D-lactyl ether substituent of MurNAc 6-phosphate, producing GlcNAc 6-phosphate and D-lactate. This is N-acetylmuramic acid 6-phosphate etherase from Thermosynechococcus vestitus (strain NIES-2133 / IAM M-273 / BP-1).